Here is a 456-residue protein sequence, read N- to C-terminus: Phosphoglucomutase/phosphomannomutase (456 aa).

Residue Ser101 is the Phosphoserine intermediate of the active site. Mg(2+)-binding residues include Ser101, Asp243, Asp245, and Asp247. Position 101 is a phosphoserine; by autocatalysis (Ser101).

This sequence belongs to the phosphohexose mutase family. In terms of assembly, homotetramer. Mg(2+) serves as cofactor. Activated by phosphorylation.

It catalyses the reaction alpha-D-glucose 1-phosphate = alpha-D-glucose 6-phosphate. The catalysed reaction is alpha-D-mannose 1-phosphate = D-mannose 6-phosphate. Catalyzes the interconversion of glucose 1-phosphate and glucose 6-phosphate, and the interconversion of mannose 1-phosphate and mannose 6-phosphate. Also displays low activity with deoxyribose 1-phosphate and glucosamine 1-phosphate. In Thermococcus kodakarensis (strain ATCC BAA-918 / JCM 12380 / KOD1) (Pyrococcus kodakaraensis (strain KOD1)), this protein is Phosphoglucomutase/phosphomannomutase.